The following is a 497-amino-acid chain: Serine/threonine-protein phosphatase 2A 56 kDa regulatory subunit beta isoform (497 aa).

Residues 1–19 (METKLPPASTPTSPSSPGL) are compositionally biased toward low complexity. Disordered regions lie at residues 1-55 (METK…YQSN) and 475-497 (TQGA…GGQS). Phosphoserine; by CLK2 is present on residues serine 32, serine 35, serine 44, serine 46, serine 47, and serine 48. Over residues 34-45 (RSLRRARPRRSH) the composition is skewed to basic residues.

It belongs to the phosphatase 2A regulatory subunit B56 family. As to quaternary structure, component of the serine/threonine-protein phosphatase 2A complex (PP2A). This complex consists of a common heterodimeric core enzyme, composed of a 36 kDa catalytic subunit (subunit C) and a 65 kDa constant scaffold subunit (PR65 or subunit A), that associates with a variety of regulatory subunits. Proteins that associate with the core dimer include three families of regulatory subunits B (the R2/B/PR55/B55, R3/B''/PR72/PR130/PR59 and R5/B'/B56 families), the 48 kDa variable regulatory subunit, viral proteins, and cell signaling molecules. Interacts with SGO1. Interacts with AKT1. Interacts with CUL3 and KLHL15; this interaction leads to proteasomal degradation. In terms of processing, ubiquitinated by E3 CUL3-KLHL15 complex; this modification leads to proteasomal degradation. Highest expression in brain.

Its subcellular location is the cytoplasm. Functionally, as the regulatory component of the serine/threonine-protein phosphatase 2A (PP2A) holoenzyme, modulates substrate specificity, subcellular localization, and responsiveness to phosphorylation. The phosphorylated form mediates the interaction between PP2A and AKT1, leading to AKT1 dephosphorylation. The protein is Serine/threonine-protein phosphatase 2A 56 kDa regulatory subunit beta isoform (PPP2R5B) of Homo sapiens (Human).